The sequence spans 48 residues: Sulfide dehydrogenase [flavocytochrome c] flavoprotein chain (48 aa).

40–46 (VTCPFSN) serves as a coordination point for FAD.

Dimer of one cytochrome and one flavoprotein.

It localises to the periplasm. The enzyme catalyses hydrogen sulfide + 2 Fe(III)-[cytochrome c] = sulfur + 2 Fe(II)-[cytochrome c] + H(+). The protein is Sulfide dehydrogenase [flavocytochrome c] flavoprotein chain of Chlorobaculum thiosulfatiphilum (Chlorobium limicola f.sp. thiosulfatophilum).